Here is a 692-residue protein sequence, read N- to C-terminus: DNA ligase (692 aa).

NAD(+) contacts are provided by residues 40–44, 89–90, and glutamate 121; these read DAAYD and SL. Residue lysine 123 is the N6-AMP-lysine intermediate of the active site. Positions 144, 181, 297, and 321 each coordinate NAD(+). Positions 415, 417, 439, and 445 each coordinate Zn(2+). The region spanning 614 to 692 is the BRCT domain; that stretch reads KTDTAVAGKT…EDEWLEMVGS (79 aa).

Belongs to the NAD-dependent DNA ligase family. LigA subfamily. Requires Mg(2+) as cofactor. It depends on Mn(2+) as a cofactor.

The enzyme catalyses NAD(+) + (deoxyribonucleotide)n-3'-hydroxyl + 5'-phospho-(deoxyribonucleotide)m = (deoxyribonucleotide)n+m + AMP + beta-nicotinamide D-nucleotide.. Its function is as follows. DNA ligase that catalyzes the formation of phosphodiester linkages between 5'-phosphoryl and 3'-hydroxyl groups in double-stranded DNA using NAD as a coenzyme and as the energy source for the reaction. It is essential for DNA replication and repair of damaged DNA. The protein is DNA ligase of Phenylobacterium zucineum (strain HLK1).